Reading from the N-terminus, the 245-residue chain is Eukaryotic translation initiation factor 4E type 2 (245 aa).

Residues 1–38 (MNNKFDALKDDDSGDHDQNEENSTQKDGEKEKTERDKN) show a composition bias toward basic and acidic residues. Residues 1–52 (MNNKFDALKDDDSGDHDQNEENSTQKDGEKEKTERDKNQSSSKRKAVVPGPA) form a disordered region. Ser13 is subject to Phosphoserine. The segment at 54–57 (HPLQ) is EIF4EBP1/2/3 binding. Residue 78–79 (YE) participates in mRNA binding. The interval 95-99 (WRFYS) is EIF4EBP1/2/3 binding. MRNA contacts are provided by residues His110 and 124 to 125 (WE). Lys134 carries the post-translational modification N6-acetyllysine; alternate. A Glycyl lysine isopeptide (Lys-Gly) (interchain with G-Cter in ISG15); alternate cross-link involves residue Lys134. The interval 150-157 (NLILAMLG) is EIF4EBP1/2/3 binding. Residues 174–179 (RFQEDI) and 222–224 (KMP) contribute to the mRNA site. A Glycyl lysine isopeptide (Lys-Gly) (interchain with G-Cter in ISG15) cross-link involves residue Lys222.

Belongs to the eukaryotic initiation factor 4E family. In terms of assembly, interacts with EIF4EBP1, EIF4EBP2 and EIF4EBP3. Does not interact with eIF4G (EIF4G1, EIF4G2 or EIF4G3). Component of the 4EHP-GYF2 complex, at least composed of EIF4E2, GIGYF2 and ZNF598. Interacts with GIGYF2 (via the 4EHP-binding motif); the interaction is direct. Interacts with EIF4ENIF1/4E-T (via YXXXXLphi motif); increasing affinity for the 7-methylguanosine-containing mRNA cap. Post-translationally, ubiquitinated by ARIH1. The consequences of ubiquitination are however unclear: according to a report, EIF4E2 ubiquitination leads to promote EIF4E2 cap-binding and protein translation arrest. According to another report ubiquitination leads to its subsequent degradation. ISGylation enhances its cap structure-binding activity and translation-inhibition activity.

Its subcellular location is the cytoplasm. The protein resides in the P-body. In terms of biological role, recognizes and binds the 7-methylguanosine-containing mRNA cap during an early step in the initiation. Acts as a repressor of translation initiation. In contrast to EIF4E, it is unable to bind eIF4G (EIF4G1, EIF4G2 or EIF4G3), suggesting that it acts by competing with EIF4E and block assembly of eIF4F at the cap. In P-bodies, component of a complex that promotes miRNA-mediated translational repression. Involved in virus-induced host response by mediating miRNA MIR34A-induced translational silencing which controls IFNB1 production by a negative feedback mechanism. Functionally, component of the 4EHP-GYF2 complex, a multiprotein complex that acts as a repressor of translation initiation. In association with GIGYF2, assists ribosome-associated quality control (RQC) by sequestering the mRNA cap, blocking ribosome initiation and decreasing the translational load on problematic messages. Part of a pathway that works in parallel to RQC-mediated degradation of the stalled nascent polypeptide. GIGYF2 and EIF4E2 work downstream and independently of ZNF598, which seems to work as a scaffold that can recruit them to faulty mRNA even if alternative recruitment mechanisms may exist. (Microbial infection) Upon SARS coronavirus-2/SARS-CoV-2 infection, the interaction with non-structural protein 2 (nsp2) with GIGYF2 enhances GIGYF2 binding to EIF4E2 and increases repression of translation initiation of genes involved in antiviral innate immune response such as IFNB1. The polypeptide is Eukaryotic translation initiation factor 4E type 2 (Homo sapiens (Human)).